Consider the following 477-residue polypeptide: Proton-coupled amino acid transporter 3 (477 aa).

Over 1–54 (MGNVPLLREVGKCQRNMFGRSTASSKGSSNSRSSSSTSPKKGPRREADALMFIQ) the chain is Cytoplasmic. The span at 19-40 (GRSTASSKGSSNSRSSSSTSPK) shows a compositional bias: low complexity. The disordered stretch occupies residues 19-43 (GRSTASSKGSSNSRSSSSTSPKKGP). The helical transmembrane segment at 55-75 (IFIHLLKSNIGTGFLGLPLAV) threads the bilayer. Over 76-77 (KN) the chain is Extracellular. A helical membrane pass occupies residues 78-98 (AGLLVGPVSLLAIGALTVHCM). The Cytoplasmic segment spans residues 99 to 144 (DILLNCACHLTQRLQRSFVNYEETTMYSLETCPSPWLRTHSVWGRY). Residues 145–165 (VVSFLLIVTQLGFCSVYFMFL) form a helical membrane-spanning segment. Residues 166–202 (ADNLQQIMEEAHFTSNVCQPRQSLVMTSILDTRFYML) are Extracellular-facing. Residues 203–223 (TILPFLILLVLIQNPQVLSIF) traverse the membrane as a helical segment. Topologically, residues 224–225 (ST) are cytoplasmic. Residues 226–246 (LATITTLSSLALIFEYLIQTP) traverse the membrane as a helical segment. The Extracellular portion of the chain corresponds to 247–259 (HHSNLPLVANWKT). The helical transmembrane segment at 260–280 (FLLFFGTAIFTFEGVGMVLPL) threads the bilayer. The Cytoplasmic segment spans residues 281–291 (KSQMKSPQQFP). A helical transmembrane segment spans residues 292 to 312 (AVLYLGMSFVIFLYICLGTLG). Over 313–344 (YMKFGTDTQASITLNLPICWLYQSVKLMYSVG) the chain is Extracellular. The helical transmembrane segment at 345 to 365 (IFFTYALQFHVPAEIIVPYVV) threads the bilayer. Topologically, residues 366-374 (SRVSENWAL) are cytoplasmic. A helical membrane pass occupies residues 375–395 (FVDLTVRTALVCLTCFSAVLI). Residues 396 to 399 (PRLD) lie on the Extracellular side of the membrane. The chain crosses the membrane as a helical span at residues 400-420 (LVISLVGSVSSSALAIIIPPL). The Cytoplasmic portion of the chain corresponds to 421-432 (LEIATFYSENIS). The chain crosses the membrane as a helical span at residues 433–453 (CATIVKDIMISILGLLGCVLG). Over 454–477 (TYQALYEMTQQTHFYMANSTRVHI) the chain is Extracellular.

This sequence belongs to the amino acid/polyamine transporter 2 family. Specifically expressed in testis.

The protein localises to the membrane. The polypeptide is Proton-coupled amino acid transporter 3 (Slc36a3) (Mus musculus (Mouse)).